The primary structure comprises 344 residues: uncharacterized protein (344 aa).

The disordered stretch occupies residues 95-344 (TINPEDANED…TPAKKNSKGR (250 aa)). Positions 103–123 (EDAKVKNSLKLEKEEGSDEKS) are enriched in basic and acidic residues. A compositionally biased stretch (acidic residues) spans 135-155 (SDDESDNSNDSEESEAEDSDQ). Positions 191–200 (SAKNAKASKP) are enriched in low complexity. Residues 244 to 259 (SEDEDSGSDNSEEESE) are compositionally biased toward acidic residues. A compositionally biased stretch (basic residues) spans 265-276 (ASSKKPPSKSSK). Positions 281-314 (EDEDEDSGQSESEHSEEESNSDEDSGQSEEESEE) are enriched in acidic residues. A compositionally biased stretch (basic residues) spans 331–344 (TAKKTPAKKNSKGR).

This is an uncharacterized protein from Acanthamoeba polyphaga (Amoeba).